The sequence spans 234 residues: (5-formylfuran-3-yl)methyl phosphate synthase (234 aa).

The active-site Schiff-base intermediate with substrate is Lys27. Catalysis depends on Lys85, which acts as the Proton acceptor.

It belongs to the MfnB family.

It carries out the reaction 2 D-glyceraldehyde 3-phosphate = 4-(hydroxymethyl)-2-furancarboxaldehyde phosphate + phosphate + 2 H2O. It participates in cofactor biosynthesis; methanofuran biosynthesis. Its function is as follows. Catalyzes the formation of 4-(hydroxymethyl)-2-furancarboxaldehyde phosphate (4-HFC-P) from two molecules of glyceraldehyde-3-P (GA-3-P). In Methanosarcina acetivorans (strain ATCC 35395 / DSM 2834 / JCM 12185 / C2A), this protein is (5-formylfuran-3-yl)methyl phosphate synthase.